A 480-amino-acid chain; its full sequence is Coronin-2B (480 aa).

WD repeat units lie at residues 85–125 (GHQG…LKRN), 135–177 (GHSR…KMID), 179–217 (HTDV…VLQE), 220–263 (CKNH…MPMI), and 265–308 (EEID…PYLS). Residues 436–479 (NELLRMFFRQQDEIRRLKEELAQKDIRLRQLQLELKNLRNNPKN) adopt a coiled-coil conformation.

Belongs to the WD repeat coronin family. As to quaternary structure, binds to F-actin and to vinculin.

Its subcellular location is the cytoplasm. The protein resides in the cytoskeleton. May play a role in the reorganization of neuronal actin structure. In Mus musculus (Mouse), this protein is Coronin-2B (Coro2b).